We begin with the raw amino-acid sequence, 367 residues long: MSLADQVLAVNDDLPIRTDKPVHSGKVRSVYWLTPEDSARLIKEKGYDVPADAPLALMVISDRISAFDCIWQGVDGLNGVPGKGAALNAISSHWFKLFKEKGLADSHILDIPHPFVWIVQKARPVMIEAIARQYITGSMWRAYKDGEREFCGITLPEGLKKDQKLPEILITPSTKGVLTGLDGVPEADDVNVSRADIERHYQGFNFSKPADIDRYEVLLKEGFNVISDALASLDQIFVDTKFEFGYVQDAAGNEKLIYMDEVGTPDSSRIWDGAALRDGQIVEKSKEGFRQWLLNHFPDPDILLNKNRMPERFALAKGNKLPTEVMMDISNTYVGIAEKIIGHPLVRSANPKQEIIEVLRDQYGLID.

The protein belongs to the SAICAR synthetase family.

It catalyses the reaction 5-amino-1-(5-phospho-D-ribosyl)imidazole-4-carboxylate + L-aspartate + ATP = (2S)-2-[5-amino-1-(5-phospho-beta-D-ribosyl)imidazole-4-carboxamido]succinate + ADP + phosphate + 2 H(+). It functions in the pathway purine metabolism; IMP biosynthesis via de novo pathway; 5-amino-1-(5-phospho-D-ribosyl)imidazole-4-carboxamide from 5-amino-1-(5-phospho-D-ribosyl)imidazole-4-carboxylate: step 1/2. In Aeromonas salmonicida (strain A449), this protein is Phosphoribosylaminoimidazole-succinocarboxamide synthase.